The chain runs to 511 residues: Mesoderm induction early response protein 1 (511 aa).

A compositionally biased stretch (low complexity) spans 1–16 (MAEPSVESSSPGGSAT). A disordered region spans residues 1–171 (MAEPSVESSS…EEESEEDEDY (171 aa)). At Ser10 the chain carries Phosphoserine. Positions 17-36 (SEDHEFDPSADMLVHDFDDE) are enriched in basic and acidic residues. Over residues 37–46 (RTLEEEEMME) the composition is skewed to acidic residues. The span at 57 to 66 (DLAREGDMPI) shows a compositional bias: basic and acidic residues. The span at 83–104 (EEEEEEEEEEEGEDDEDADNDD) shows a compositional bias: acidic residues. Residues 128–143 (QSSNDDPSQSVTSQDA) are compositionally biased toward polar residues. At Ser140 the chain carries Phosphoserine. At Tyr154 the chain carries Phosphotyrosine. Ser159 and Ser165 each carry phosphoserine. A compositionally biased stretch (acidic residues) spans 159–171 (SEIEEESEEDEDY). In terms of domain architecture, ELM2 spans 179-277 (KEIMVGSMFQ…EALRRLRFNV (99 aa)). A Glycyl lysine isopeptide (Lys-Gly) (interchain with G-Cter in SUMO2) cross-link involves residue Lys238. The SANT domain maps to 282–334 (EELSVWTEEECRNFEQGLKAYGKDFHLIQANKVRTRSVGECVAFYYMWKKSER). The segment at 365 to 511 (ESESAASSRA…KFEEHENTND (147 aa)) is disordered. A phosphoserine mark is found at Ser366, Ser368, and Ser376. The span at 397 to 408 (SSRNQNGVSSNG) shows a compositional bias: polar residues. Composition is skewed to basic and acidic residues over residues 413–422 (LNKEEVKVEG) and 461–474 (ARNE…NERP). Lys419 participates in a covalent cross-link: Glycyl lysine isopeptide (Lys-Gly) (interchain with G-Cter in SUMO2). The span at 481–493 (NSSGKESPGSSEF) shows a compositional bias: polar residues. 3 positions are modified to phosphoserine: Ser482, Ser487, and Ser490. Residues 499–511 (SHGKFEEHENTND) show a composition bias toward basic and acidic residues.

Interacts with HDAC1. Part of a complex containing at least CDYL, MIER1, MIER2, HDAC1 and HDAC2. Ubiquitously expressed. Isoform 1 is only expressed in testis.

The protein resides in the nucleus. In terms of biological role, transcriptional repressor regulating the expression of a number of genes including SP1 target genes. Probably functions through recruitment of HDAC1 a histone deacetylase involved in chromatin silencing. This chain is Mesoderm induction early response protein 1 (Mier1), found in Mus musculus (Mouse).